A 562-amino-acid polypeptide reads, in one-letter code: Catalase T (562 aa).

Residues histidine 64 and asparagine 137 contribute to the active site. Tyrosine 351 lines the heme pocket.

Belongs to the catalase family. As to quaternary structure, homotetramer. It depends on heme as a cofactor.

The protein localises to the cytoplasm. It catalyses the reaction 2 H2O2 = O2 + 2 H2O. In terms of biological role, occurs in almost all aerobically respiring organisms and serves to protect cells from the toxic effects of hydrogen peroxide. This chain is Catalase T (CTT1), found in Saccharomyces cerevisiae (strain YJM789) (Baker's yeast).